The chain runs to 309 residues: MELENDTRIPEFLLLGFSEEPKLQPFLFGLFLSMYLVTILGNLLLILAVSSDSHLHTPMYFFLANLSFVDICFTCTTIPKMLVNIQTQRKVITYESCIIQMYFFELFAGIDNFLLTVMAYDRYMAICYPLHYMVIMNPQLCSLLLLVSWIMSALHSLLQTLMVLRLSFCTHFQIPHFFCELNQMIQLACSDTFLNNMMLYFAAILLGVAPLVGVLYSYFKIVSSIRGISSAHSKYKAFSTCASHLSVVSLFYCTSLGVYLSSAAPQSTHTSSVASVMYTVVTPMLNPFIYSLRNKDIKGALNVFFRGKP.

Residues 1–25 (MELENDTRIPEFLLLGFSEEPKLQP) lie on the Extracellular side of the membrane. A glycan (N-linked (GlcNAc...) asparagine) is linked at N5. The helical transmembrane segment at 26–49 (FLFGLFLSMYLVTILGNLLLILAV) threads the bilayer. Topologically, residues 50–57 (SSDSHLHT) are cytoplasmic. Residues 58 to 79 (PMYFFLANLSFVDICFTCTTIP) traverse the membrane as a helical segment. Residues 80 to 100 (KMLVNIQTQRKVITYESCIIQ) are Extracellular-facing. The helical transmembrane segment at 101-120 (MYFFELFAGIDNFLLTVMAY) threads the bilayer. The Cytoplasmic portion of the chain corresponds to 121–139 (DRYMAICYPLHYMVIMNPQ). Residues 140–158 (LCSLLLLVSWIMSALHSLL) form a helical membrane-spanning segment. The Extracellular segment spans residues 159-196 (QTLMVLRLSFCTHFQIPHFFCELNQMIQLACSDTFLNN). The helical transmembrane segment at 197–219 (MMLYFAAILLGVAPLVGVLYSYF) threads the bilayer. At 220-236 (KIVSSIRGISSAHSKYK) the chain is on the cytoplasmic side. A helical membrane pass occupies residues 237–260 (AFSTCASHLSVVSLFYCTSLGVYL). Over 261–272 (SSAAPQSTHTSS) the chain is Extracellular. Residues 273–292 (VASVMYTVVTPMLNPFIYSL) traverse the membrane as a helical segment. Topologically, residues 293-309 (RNKDIKGALNVFFRGKP) are cytoplasmic.

It belongs to the G-protein coupled receptor 1 family.

It is found in the cell membrane. Its function is as follows. Putative odorant or sperm cell receptor. This chain is Olfactory receptor-like protein OLF4, found in Canis lupus familiaris (Dog).